Consider the following 126-residue polypeptide: Small ribosomal subunit protein uS13 (126 aa).

A disordered region spans residues 94 to 126 (RGLPVHGQRTSTNARTRKGPRRAIAGKKKPGKK). Residues 108 to 126 (RTRKGPRRAIAGKKKPGKK) show a composition bias toward basic residues.

It belongs to the universal ribosomal protein uS13 family. In terms of assembly, part of the 30S ribosomal subunit. Forms a loose heterodimer with protein S19. Forms two bridges to the 50S subunit in the 70S ribosome.

In terms of biological role, located at the top of the head of the 30S subunit, it contacts several helices of the 16S rRNA. In the 70S ribosome it contacts the 23S rRNA (bridge B1a) and protein L5 of the 50S subunit (bridge B1b), connecting the 2 subunits; these bridges are implicated in subunit movement. Contacts the tRNAs in the A and P-sites. The protein is Small ribosomal subunit protein uS13 of Streptomyces avermitilis (strain ATCC 31267 / DSM 46492 / JCM 5070 / NBRC 14893 / NCIMB 12804 / NRRL 8165 / MA-4680).